Here is a 328-residue protein sequence, read N- to C-terminus: DNA-directed RNA polymerase subunit alpha (328 aa).

Positions 1–234 (MVREKVKVST…DLFIPFLQAE (234 aa)) are alpha N-terminal domain (alpha-NTD). The interval 268–328 (IALKSIFIDQ…KQIMSILEKK (61 aa)) is alpha C-terminal domain (alpha-CTD).

It belongs to the RNA polymerase alpha chain family. In terms of assembly, in plastids the minimal PEP RNA polymerase catalytic core is composed of four subunits: alpha, beta, beta', and beta''. When a (nuclear-encoded) sigma factor is associated with the core the holoenzyme is formed, which can initiate transcription.

The protein localises to the plastid. It is found in the chloroplast. It catalyses the reaction RNA(n) + a ribonucleoside 5'-triphosphate = RNA(n+1) + diphosphate. Its function is as follows. DNA-dependent RNA polymerase catalyzes the transcription of DNA into RNA using the four ribonucleoside triphosphates as substrates. This is DNA-directed RNA polymerase subunit alpha from Citrus sinensis (Sweet orange).